Reading from the N-terminus, the 37-residue chain is Large ribosomal subunit protein bL36c (37 aa).

This sequence belongs to the bacterial ribosomal protein bL36 family.

Its subcellular location is the plastid. The protein localises to the chloroplast. This chain is Large ribosomal subunit protein bL36c, found in Tetradesmus obliquus (Green alga).